The primary structure comprises 78 residues: Putative membrane protein insertion efficiency factor (78 aa).

Belongs to the UPF0161 family.

It is found in the cell membrane. Could be involved in insertion of integral membrane proteins into the membrane. The polypeptide is Putative membrane protein insertion efficiency factor (Bacillus anthracis (strain A0248)).